A 224-amino-acid chain; its full sequence is uncharacterized protein (224 aa).

6 helical membrane passes run 25-45, 54-74, 91-111, 119-139, 142-162, and 174-194; these read MMLA…IPFF, ISVV…SLTI, IGVL…RLYF, FCWI…LTTL, ILIT…NFLI, and HFFF…YSFF.

It localises to the cell membrane. This is an uncharacterized protein from Mycoplasma genitalium (strain ATCC 33530 / DSM 19775 / NCTC 10195 / G37) (Mycoplasmoides genitalium).